The primary structure comprises 316 residues: Pentatricopeptide repeat-containing protein At1g19525 (316 aa).

PPR repeat units lie at residues D9–P43, D44–A78, S79–P113, S115–P149, D150–I184, and G185–P219.

This sequence belongs to the PPR family. P subfamily.

This is Pentatricopeptide repeat-containing protein At1g19525 from Arabidopsis thaliana (Mouse-ear cress).